Reading from the N-terminus, the 132-residue chain is Holo-[acyl-carrier-protein] synthase (132 aa).

Mg(2+)-binding residues include Asp-8 and Glu-62.

This sequence belongs to the P-Pant transferase superfamily. AcpS family. Mg(2+) is required as a cofactor.

It localises to the cytoplasm. The enzyme catalyses apo-[ACP] + CoA = holo-[ACP] + adenosine 3',5'-bisphosphate + H(+). In terms of biological role, transfers the 4'-phosphopantetheine moiety from coenzyme A to a Ser of acyl-carrier-protein. This is Holo-[acyl-carrier-protein] synthase from Methylibium petroleiphilum (strain ATCC BAA-1232 / LMG 22953 / PM1).